The chain runs to 101 residues: Gamma-secretase subunit PEN-2 (101 aa).

Residues 1 to 17 (MNLERIPNEEKLSLCRR) are Cytoplasmic-facing. An intramembrane region (helical) is located at residues 18–36 (YYLGGFAFLPFLWLVNILW). Residues 37-57 (FFKEAFLKPAYTEQPQIKSYV) lie on the Cytoplasmic side of the membrane. A helical membrane pass occupies residues 58–78 (KKSALGLLLWVAVLTTWITVF). Over 79–101 (QHFRAQWGEVGDYLSFTIPLGTA) the chain is Lumenal.

This sequence belongs to the PEN-2 family. The functional gamma-secretase complex is composed of at least four polypeptides: a presenilin homodimer (psen1 or psen2), nicastrin (ncstn), aph1 (aph1a or aph1b) and psenen.

The protein localises to the endoplasmic reticulum membrane. Its subcellular location is the golgi apparatus. It localises to the golgi stack membrane. The protein resides in the cell membrane. It is found in the membrane. Functionally, essential subunit of the gamma-secretase complex, an endoprotease complex that catalyzes the intramembrane cleavage of integral membrane proteins such as Notch receptors and APP (amyloid-beta precursor protein). The gamma-secretase complex plays a role in Notch and Wnt signaling cascades and regulation of downstream processes via its role in processing key regulatory proteins. The polypeptide is Gamma-secretase subunit PEN-2 (psenen) (Danio rerio (Zebrafish)).